The primary structure comprises 217 residues: Uracil-DNA glycosylase (217 aa).

Catalysis depends on D62, which acts as the Proton acceptor.

This sequence belongs to the uracil-DNA glycosylase (UDG) superfamily. UNG family.

Its subcellular location is the cytoplasm. It catalyses the reaction Hydrolyzes single-stranded DNA or mismatched double-stranded DNA and polynucleotides, releasing free uracil.. Its function is as follows. Excises uracil residues from the DNA which can arise as a result of misincorporation of dUMP residues by DNA polymerase or due to deamination of cytosine. This Streptococcus equi subsp. zooepidemicus (strain MGCS10565) protein is Uracil-DNA glycosylase.